The following is a 470-amino-acid chain: 3-isopropylmalate dehydratase large subunit (470 aa).

Residues Cys-346, Cys-406, and Cys-409 each coordinate [4Fe-4S] cluster.

It belongs to the aconitase/IPM isomerase family. LeuC type 1 subfamily. Heterodimer of LeuC and LeuD. The cofactor is [4Fe-4S] cluster.

It carries out the reaction (2R,3S)-3-isopropylmalate = (2S)-2-isopropylmalate. Its pathway is amino-acid biosynthesis; L-leucine biosynthesis; L-leucine from 3-methyl-2-oxobutanoate: step 2/4. Catalyzes the isomerization between 2-isopropylmalate and 3-isopropylmalate, via the formation of 2-isopropylmaleate. The polypeptide is 3-isopropylmalate dehydratase large subunit (Shouchella clausii (strain KSM-K16) (Alkalihalobacillus clausii)).